The sequence spans 264 residues: Probable BRI1 kinase inhibitor 1 (264 aa).

2 disordered regions span residues 1–146 and 165–240; these read MTMN…GLDV and FSRH…SEES. Pro residues predominate over residues 9-30; sequence RSQPPPPHPPLFKPTTPPPPPL. The span at 31–40 shows a compositional bias: low complexity; the sequence is LSTSTSTSPP. Polar residues predominate over residues 77–97; that stretch reads LSHNNYSSKANQHRQTGSSSS. Over residues 98–107 the composition is skewed to basic and acidic residues; sequence SKEKDREYKA. Composition is skewed to low complexity over residues 208-219 and 227-239; these read LSSAPASLRASP and VGGSVKVSTSSEE.

Interacts with BRI1. In terms of processing, phosphorylated by BRI1.

Its function is as follows. Negative regulator of brassinosteroid signaling. This Oryza sativa subsp. japonica (Rice) protein is Probable BRI1 kinase inhibitor 1 (BKI1).